The primary structure comprises 136 residues: uncharacterized protein (136 aa).

Disordered stretches follow at residues 58–82 (TSDDDEKPGNSKIKSHTDQPPTTQT) and 112–136 (NNPKIKTNNPNEEFENTGADSVVTQ).

This is an uncharacterized protein from Dictyostelium discoideum (Social amoeba).